We begin with the raw amino-acid sequence, 72 residues long: Small ribosomal subunit protein bS18 (72 aa).

It belongs to the bacterial ribosomal protein bS18 family. Part of the 30S ribosomal subunit. Forms a tight heterodimer with protein bS6.

Binds as a heterodimer with protein bS6 to the central domain of the 16S rRNA, where it helps stabilize the platform of the 30S subunit. In Francisella tularensis subsp. holarctica (strain FTNF002-00 / FTA), this protein is Small ribosomal subunit protein bS18.